A 468-amino-acid chain; its full sequence is GTPase Der (468 aa).

2 EngA-type G domains span residues 3-169 (PVMA…SPPD) and 199-372 (IRLA…KAAT). Residues 9-16 (GRANVGKS), 56-60 (DTGGF), 119-122 (NKAE), 205-212 (GRPNVGKS), 252-256 (DTAGL), and 317-320 (NKWD) contribute to the GTP site. A KH-like domain is found at 373–457 (CKMSTPVLTR…PLRIELKTSH (85 aa)).

It belongs to the TRAFAC class TrmE-Era-EngA-EngB-Septin-like GTPase superfamily. EngA (Der) GTPase family. Associates with the 50S ribosomal subunit.

In terms of biological role, GTPase that plays an essential role in the late steps of ribosome biogenesis. This is GTPase Der from Verminephrobacter eiseniae (strain EF01-2).